Here is a 331-residue protein sequence, read N- to C-terminus: Zinc finger protein 660 (331 aa).

The segment covering 1–12 (MRRKTRNFKHKT) has biased composition (basic residues). Residues 1–35 (MRRKTRNFKHKTVKDNKVLTEGSDQESEKDNSQCC) form a disordered region. Residue serine 23 is modified to Phosphoserine. 10 C2H2-type zinc fingers span residues 50–72 (YVCT…ERIH), 78–100 (YKCK…RRIH), 106–128 (YTCS…QGIH), 134–156 (YECK…HRVH), 162–184 (YSCI…QRMH), 190–212 (YKCK…QRIH), 218–240 (YECD…QRLH), 246–268 (YKCN…QRVH), 274–296 (YKCN…LRTH), and 302–324 (YKCS…QRKH).

It belongs to the krueppel C2H2-type zinc-finger protein family.

It is found in the nucleus. In terms of biological role, may be involved in transcriptional regulation. This is Zinc finger protein 660 (ZNF660) from Homo sapiens (Human).